We begin with the raw amino-acid sequence, 169 residues long: MRVARLPLLHPHRAAPVVRRQLRGSSLLEMLLVIALIALAGVLAAAALTGGIDGMRLRSAGKAIAAQLRYTRTQAIATGTPQRFLIDPQQRRWEAPGGHHGDLPAALEVRFTGARQVQSRQDQGAIQFFADGASTGGRIDLTIKDARWRVDVGWITGEVRSGPLRTPAP.

A propeptide spans 1–29 (leader sequence); the sequence is MRVARLPLLHPHRAAPVVRRQLRGSSLLE. Methionine 30 is subject to N-methylmethionine. Residues 32-52 form a helical membrane-spanning segment; it reads LVIALIALAGVLAAAALTGGI.

This sequence belongs to the GSP H family. In terms of assembly, type II secretion is composed of four main components: the outer membrane complex, the inner membrane complex, the cytoplasmic secretion ATPase and the periplasm-spanning pseudopilus. Interacts with core component XpsG. Interacts with minor pseudopilins XpsI and XpsJ. In terms of processing, cleaved by prepilin peptidase. Post-translationally, methylated by prepilin peptidase at the amino group of the N-terminal phenylalanine once the leader sequence is cleaved by prepilin peptidase.

It localises to the cell inner membrane. In terms of biological role, component of the type II secretion system required for the energy-dependent secretion of extracellular factors such as proteases and toxins from the periplasm. Part of the pseudopilus tip complex that is critical for the recognition and binding of secretion substrates. This is Type II secretion system protein H (xpsH) from Xanthomonas campestris pv. campestris (strain ATCC 33913 / DSM 3586 / NCPPB 528 / LMG 568 / P 25).